Consider the following 391-residue polypeptide: Pyruvate dehydrogenase E1 component subunit alpha type II, mitochondrial (391 aa).

The N-terminal 17 residues, 1–17, are a transit peptide targeting the mitochondrion; it reads SNIFKGPTVGSSVVAMS. His-83, Tyr-109, Arg-110, Gly-148, Gly-156, Val-158, Asp-187, Gly-188, Ala-189, Asn-216, and Tyr-218 together coordinate pyruvate. Residues Tyr-109 and Arg-110 each contribute to the thiamine diphosphate site. Thiamine diphosphate contacts are provided by Gly-156, Val-158, Asp-187, Gly-188, Ala-189, and Asn-216. A Mg(2+)-binding site is contributed by Asp-187. Mg(2+) contacts are provided by Asn-216 and Tyr-218. His-283 provides a ligand contact to thiamine diphosphate. Phosphoserine occurs at positions 284 and 291.

As to quaternary structure, heterotetramer of two PDHA2 and two PDHB subunits. The heterotetramer interacts with DLAT, and is part of the multimeric pyruvate dehydrogenase complex that contains multiple copies of pyruvate dehydrogenase (E1), dihydrolipoamide acetyltransferase (DLAT, E2) and lipoamide dehydrogenase (DLD, E3). It depends on thiamine diphosphate as a cofactor. Mg(2+) serves as cofactor.

The protein localises to the mitochondrion matrix. The catalysed reaction is N(6)-[(R)-lipoyl]-L-lysyl-[protein] + pyruvate + H(+) = N(6)-[(R)-S(8)-acetyldihydrolipoyl]-L-lysyl-[protein] + CO2. Pyruvate dehydrogenase activity is inhibited by phosphorylation of PDHA2; it is reactivated by dephosphorylation. The pyruvate dehydrogenase complex catalyzes the overall conversion of pyruvate to acetyl-CoA and CO(2), and thereby links the glycolytic pathway to the tricarboxylic cycle. This Ascaris suum (Pig roundworm) protein is Pyruvate dehydrogenase E1 component subunit alpha type II, mitochondrial.